The chain runs to 516 residues: Bifunctional purine biosynthesis protein PurH (516 aa).

Residues 1 to 149 form the MGS-like domain; the sequence is MSERQPIRRA…KNHANVAVLT (149 aa).

Belongs to the PurH family.

It carries out the reaction (6R)-10-formyltetrahydrofolate + 5-amino-1-(5-phospho-beta-D-ribosyl)imidazole-4-carboxamide = 5-formamido-1-(5-phospho-D-ribosyl)imidazole-4-carboxamide + (6S)-5,6,7,8-tetrahydrofolate. The catalysed reaction is IMP + H2O = 5-formamido-1-(5-phospho-D-ribosyl)imidazole-4-carboxamide. Its pathway is purine metabolism; IMP biosynthesis via de novo pathway; 5-formamido-1-(5-phospho-D-ribosyl)imidazole-4-carboxamide from 5-amino-1-(5-phospho-D-ribosyl)imidazole-4-carboxamide (10-formyl THF route): step 1/1. It functions in the pathway purine metabolism; IMP biosynthesis via de novo pathway; IMP from 5-formamido-1-(5-phospho-D-ribosyl)imidazole-4-carboxamide: step 1/1. In Cutibacterium acnes (strain DSM 16379 / KPA171202) (Propionibacterium acnes), this protein is Bifunctional purine biosynthesis protein PurH.